Reading from the N-terminus, the 422-residue chain is 5'-deoxyadenosine deaminase (422 aa).

Zn(2+)-binding residues include histidine 57 and histidine 59. The substrate site is built by glutamate 86 and histidine 178. Histidine 205 provides a ligand contact to Zn(2+). Residues glutamate 208 and aspartate 294 each coordinate substrate. Aspartate 294 serves as a coordination point for Zn(2+).

This sequence belongs to the metallo-dependent hydrolases superfamily. MTA/SAH deaminase family. In terms of assembly, homotetramer. Zn(2+) serves as cofactor.

The catalysed reaction is 5'-deoxyadenosine + H2O + H(+) = 5'-deoxyinosine + NH4(+). The enzyme catalyses S-adenosyl-L-homocysteine + H2O + H(+) = S-inosyl-L-homocysteine + NH4(+). It catalyses the reaction S-methyl-5'-thioadenosine + H2O + H(+) = S-methyl-5'-thioinosine + NH4(+). It carries out the reaction adenosine + H2O + H(+) = inosine + NH4(+). It participates in amino-acid biosynthesis; S-adenosyl-L-methionine biosynthesis. Its function is as follows. Catalyzes the deamination of three SAM-derived enzymatic products, namely 5'-deoxyadenosine, S-adenosyl-L-homocysteine, and 5'-methylthioadenosine, to produce the inosine analogs. Can also deaminate adenosine. The preferred substrate for this enzyme is 5'-deoxyadenosine, but all these substrates are efficiently deaminated. Likely functions in a S-adenosyl-L-methionine (SAM) recycling pathway from S-adenosyl-L-homocysteine (SAH) produced from SAM-dependent methylation reactions. May also be involved in the recycling of 5'-deoxyadenosine, whereupon the 5'-deoxyribose moiety of 5'-deoxyinosine is further metabolized to deoxyhexoses used for the biosynthesis of aromatic amino acids in methanogens. This Methanococcus maripaludis (strain DSM 14266 / JCM 13030 / NBRC 101832 / S2 / LL) protein is 5'-deoxyadenosine deaminase.